Consider the following 244-residue polypeptide: tRNA1(Val) (adenine(37)-N6)-methyltransferase (244 aa).

Belongs to the methyltransferase superfamily. tRNA (adenine-N(6)-)-methyltransferase family.

It is found in the cytoplasm. It catalyses the reaction adenosine(37) in tRNA1(Val) + S-adenosyl-L-methionine = N(6)-methyladenosine(37) in tRNA1(Val) + S-adenosyl-L-homocysteine + H(+). Functionally, specifically methylates the adenine in position 37 of tRNA(1)(Val) (anticodon cmo5UAC). This Shewanella sediminis (strain HAW-EB3) protein is tRNA1(Val) (adenine(37)-N6)-methyltransferase.